Reading from the N-terminus, the 540-residue chain is Chaperonin GroEL (540 aa).

ATP is bound by residues 30–33, 87–91, G414, 479–481, and D495; these read TLGP, DGTTT, and NAL.

This sequence belongs to the chaperonin (HSP60) family. As to quaternary structure, forms a cylinder of 14 subunits composed of two heptameric rings stacked back-to-back. Interacts with the co-chaperonin GroES.

It localises to the cytoplasm. The catalysed reaction is ATP + H2O + a folded polypeptide = ADP + phosphate + an unfolded polypeptide.. In terms of biological role, together with its co-chaperonin GroES, plays an essential role in assisting protein folding. The GroEL-GroES system forms a nano-cage that allows encapsulation of the non-native substrate proteins and provides a physical environment optimized to promote and accelerate protein folding. This Rubrobacter xylanophilus (strain DSM 9941 / JCM 11954 / NBRC 16129 / PRD-1) protein is Chaperonin GroEL.